The chain runs to 358 residues: Trace amine-associated receptor 7a (358 aa).

At 1 to 47 (MDKLVDHFLSDQSRTMNEDLFSATSTELCYENLNRSCVRSPYSPGPR) the chain is on the extracellular side. An N-linked (GlcNAc...) asparagine glycan is attached at asparagine 34. 2 disulfides stabilise this stretch: cysteine 37/cysteine 201 and cysteine 120/cysteine 205. Residues 48 to 68 (LILYAVFGFGAALAVCGNLLV) traverse the membrane as a helical segment. The Cytoplasmic segment spans residues 69–83 (MTSILHFRQLHSPAN). Residues 84 to 104 (FLVASLACADFLVGLTVMPFS) form a helical membrane-spanning segment. The Extracellular portion of the chain corresponds to 105-121 (TVRSVEGCWYFGESYCK). Residues 122–143 (FHSCFEGSFCYSSIFHLCFISV) form a helical membrane-spanning segment. Residues 144–166 (DRYIAVSDPLTYPTRFTASVSGK) are Cytoplasmic-facing. Residues 167–187 (CITFSWLLSIIYSFSLLYTGA) traverse the membrane as a helical segment. Residues 188 to 212 (NEAGLEDLVSVLTCVGGCQIAVNQS) are Extracellular-facing. Asparagine 210 is a glycosylation site (N-linked (GlcNAc...) asparagine). A helical transmembrane segment spans residues 213–233 (WVFINFLLFLIPTLVMMTVYS). Residues 234 to 274 (KIFLIAKQQAQNIEKMSKQTARASESYKDRVAKRERKAAKT) lie on the Cytoplasmic side of the membrane. A helical transmembrane segment spans residues 275 to 295 (LGIAVAAFLLSWLPYFIDSII). Residues 296–309 (DAFLGFITPTYVYE) are Extracellular-facing. The chain crosses the membrane as a helical span at residues 310 to 333 (ILVWIAYYNSAMNPLIYAFFYPWF). The Cytoplasmic segment spans residues 334–358 (RKAIKLIVTGKILRENSSTTNLFPE).

The protein belongs to the G-protein coupled receptor 1 family. In terms of tissue distribution, specifically expressed in neurons of the olfactory epithelium.

It localises to the cell membrane. Its function is as follows. Olfactory receptor specific for N,N-dimethylalkylamines trace amines. Trace amine compounds are enriched in animal body fluids and act on trace amine-associated receptors (TAARs) to elicit both intraspecific and interspecific innate behaviors. Ligand-binding causes a conformation change that triggers signaling via G(s)-class of G alpha proteins (GNAL or GNAS). The polypeptide is Trace amine-associated receptor 7a (Mus musculus (Mouse)).